The following is a 357-amino-acid chain: 4-hydroxyphenylpyruvate dioxygenase (357 aa).

VOC domains lie at 17–137 and 165–316; these read GFEF…LVDR and YIDH…IFTD. Fe cation is bound by residues H168, H246, and E325.

This sequence belongs to the 4HPPD family. In terms of assembly, homotetramer. Fe cation is required as a cofactor.

It carries out the reaction 3-(4-hydroxyphenyl)pyruvate + O2 = homogentisate + CO2. It functions in the pathway amino-acid degradation; L-phenylalanine degradation; acetoacetate and fumarate from L-phenylalanine: step 3/6. This is 4-hydroxyphenylpyruvate dioxygenase (hpd) from Pseudomonas aeruginosa (strain ATCC 15692 / DSM 22644 / CIP 104116 / JCM 14847 / LMG 12228 / 1C / PRS 101 / PAO1).